The sequence spans 157 residues: Thiocyanate hydrolase subunit beta (157 aa).

In terms of assembly, heterododecamer consisting of 4 alpha, 4 beta, and 4 gamma subunits.

The enzyme catalyses thiocyanate + H2O + 2 H(+) = carbonyl sulfide + NH4(+). It participates in organosulfur degradation; thiocyanate degradation. In terms of biological role, involved in the degradation of thiocyanate. In Thiobacillus thioparus, this protein is Thiocyanate hydrolase subunit beta (scnB).